We begin with the raw amino-acid sequence, 218 residues long: MDKSESTSAGRNRRRRPRRGSRSAPSSSDANFRVLSQQLSRLNKTLAAGRPTINHPTFVGSERCKPGYTFTSITLKPPKIDRGSYYGKRLLLPDSVMEYDKKLVSRIQIRVNPLPKFDSTVWVTVRKVPASSDLSVAAISAMFADGASPVLVYQYAASGVQANNKLLYDLSAMRADIGDMRKYAVLVYSKDDALETDELVLHVDVEHQRIPTSGVLPV.

Methionine 1 is subject to N-acetylmethionine; by host. Residues methionine 1–alanine 30 form a disordered region. The segment covering arginine 11–serine 21 has biased composition (basic residues).

The protein belongs to the cucumovirus capsid protein family.

It localises to the virion. Its function is as follows. Capsid protein. Probably binds RNA and plays a role in packaging. This Cucumis sativus (Cucumber) protein is Capsid protein.